Here is a 612-residue protein sequence, read N- to C-terminus: Dihydroxy-acid dehydratase (612 aa).

Asp-81 contributes to the Mg(2+) binding site. Position 122 (Cys-122) interacts with [2Fe-2S] cluster. Positions 123 and 124 each coordinate Mg(2+). Lys-124 is modified (N6-carboxylysine). Cys-195 serves as a coordination point for [2Fe-2S] cluster. Glu-491 is a binding site for Mg(2+). The active-site Proton acceptor is the Ser-517.

The protein belongs to the IlvD/Edd family. In terms of assembly, homodimer. The cofactor is [2Fe-2S] cluster. It depends on Mg(2+) as a cofactor.

It catalyses the reaction (2R)-2,3-dihydroxy-3-methylbutanoate = 3-methyl-2-oxobutanoate + H2O. The enzyme catalyses (2R,3R)-2,3-dihydroxy-3-methylpentanoate = (S)-3-methyl-2-oxopentanoate + H2O. It participates in amino-acid biosynthesis; L-isoleucine biosynthesis; L-isoleucine from 2-oxobutanoate: step 3/4. It functions in the pathway amino-acid biosynthesis; L-valine biosynthesis; L-valine from pyruvate: step 3/4. Functionally, functions in the biosynthesis of branched-chain amino acids. Catalyzes the dehydration of (2R,3R)-2,3-dihydroxy-3-methylpentanoate (2,3-dihydroxy-3-methylvalerate) into 2-oxo-3-methylpentanoate (2-oxo-3-methylvalerate) and of (2R)-2,3-dihydroxy-3-methylbutanoate (2,3-dihydroxyisovalerate) into 2-oxo-3-methylbutanoate (2-oxoisovalerate), the penultimate precursor to L-isoleucine and L-valine, respectively. This is Dihydroxy-acid dehydratase from Rhizobium johnstonii (strain DSM 114642 / LMG 32736 / 3841) (Rhizobium leguminosarum bv. viciae).